The following is a 344-amino-acid chain: MGGWRVLGQASGGWRRGLGIRATSTAAGFGTKARHQLQRRGASKPSDPPGDQPFPGLLRPGTFSREELVDVLRAAVVDSKGPLVTLNKPQGLPVTGKPGELTLLSVLPELSRSLGLGEQEVQVVRASGKEASGLVLLSSCSQTASRLQKFFTHSRRARKPTATYCAVTDGIPVTSEGKIQAALKLEHIDGVNLVVPVQSPSRKDIMEGVKRTLSHFRVVATGSGCALVQLQPLTVFPSQLQAHMALQLCPVLGDHTYSARVGTVLGQRFLLPVESTKPQRQVLDEALLGRLCLTASQAARLPLHLHLHCLRLPGARPRDPPIELLAPLPSYFSRTLQCLGLHYQ.

The N-terminal 41 residues, 1 to 41, are a transit peptide targeting the mitochondrion; that stretch reads MGGWRVLGQASGGWRRGLGIRATSTAAGFGTKARHQLQRRG. The segment at 29 to 59 is disordered; it reads FGTKARHQLQRRGASKPSDPPGDQPFPGLLR. The segment covering 32–42 has biased composition (basic residues); it reads KARHQLQRRGA. At serine 64 the chain carries Phosphoserine.

The protein belongs to the pseudouridine synthase RluA family. As to quaternary structure, forms a regulatory protein-RNA complex, consisting of RCC1L, NGRN, RPUSD3, RPUSD4, TRUB2, FASTKD2 and 16S mt-rRNA.

It localises to the mitochondrion matrix. It catalyses the reaction a uridine in mRNA = a pseudouridine in mRNA. In terms of biological role, catalyzes uridine to pseudouridine isomerization (pseudouridylation) of specific mitochondrial mRNAs (mt-mRNAs), a post-transcriptional modification necessary for their translation. Acts at position 390 in COXI mt-mRNA and at position 697-699 in mitochondrial COXIII mt-mRNA. As a component of a functional protein-RNA module, consisting of RCC1L, NGRN, RPUSD3, RPUSD4, TRUB2, FASTKD2 and 16S mitochondrial ribosomal RNA (16S mt-rRNA), controls 16S mt-rRNA abundance and may play a role in mitochondrial ribosome biogenesis. This is Mitochondrial mRNA pseudouridine synthase RPUSD3 (RPUSD3) from Bos taurus (Bovine).